The chain runs to 264 residues: U1 snRNP-associated protein usp106 (264 aa).

A coiled-coil region spans residues 83 to 126 (DYLEDLERHVDDCNKRIDIAEARREKTKEEEERIDELMRDIIHT). A compositionally biased stretch (basic and acidic residues) spans 233 to 258 (EDREKSRDKKDGEKQRDNLASFEDKI). The disordered stretch occupies residues 233–264 (EDREKSRDKKDGEKQRDNLASFEDKISTSFVA).

This sequence belongs to the Luc7 family. As to quaternary structure, component of the U1 snRNP particle, a subcomplex of the spliceosome.

The protein localises to the cytoplasm. The protein resides in the nucleus. Functionally, component of the U1 snRNP particle, which recognizes and binds the 5'-splice site of pre-mRNA. Together with other non-snRNP factors, U1 snRNP forms the spliceosomal commitment complex, that targets pre-mRNA to the splicing pathway. This chain is U1 snRNP-associated protein usp106 (usp106), found in Schizosaccharomyces pombe (strain 972 / ATCC 24843) (Fission yeast).